A 507-amino-acid polypeptide reads, in one-letter code: ATP synthase subunit alpha, chloroplastic (507 aa).

Gly-170–Thr-177 is a binding site for ATP.

It belongs to the ATPase alpha/beta chains family. F-type ATPases have 2 components, CF(1) - the catalytic core - and CF(0) - the membrane proton channel. CF(1) has five subunits: alpha(3), beta(3), gamma(1), delta(1), epsilon(1). CF(0) has four main subunits: a, b, b' and c.

The protein resides in the plastid. It is found in the chloroplast thylakoid membrane. The enzyme catalyses ATP + H2O + 4 H(+)(in) = ADP + phosphate + 5 H(+)(out). Produces ATP from ADP in the presence of a proton gradient across the membrane. The alpha chain is a regulatory subunit. The chain is ATP synthase subunit alpha, chloroplastic from Anthoceros angustus (Hornwort).